Here is a 368-residue protein sequence, read N- to C-terminus: Probable magnesium transporter NIPA3 (368 aa).

Topologically, residues 1 to 18 are extracellular; it reads MASLSGSWRDAYKGMSSD. A helical transmembrane segment spans residues 19 to 39; it reads NIKGLVLALSSSLFIGASFIV. Over 40-66 the chain is Cytoplasmic; sequence KKKGLKRAGASGLRAGSGGYSYLLEPL. A helical transmembrane segment spans residues 67–87; sequence WWVGMITMIVGEIANFAAYAF. Topologically, residues 88–90 are extracellular; it reads APA. Residues 91–111 form a helical membrane-spanning segment; that stretch reads ILVTPLGALSIIISAALAHVI. The Cytoplasmic portion of the chain corresponds to 112–115; it reads LHEK. Residues 116 to 136 form a helical membrane-spanning segment; it reads LHTFGLLGCVLCVVGSITIVL. Topologically, residues 137-157 are extracellular; sequence HAPQEQEIDSVLQVWNLATEP. A helical transmembrane segment spans residues 158–178; sequence AFLLYAAAVVGAAIILIVQFV. Topologically, residues 179–189 are cytoplasmic; it reads PQYGQSHVMVY. Residues 190-210 traverse the membrane as a helical segment; the sequence is IGVCSLVGSLSVMSVKALGIA. Topologically, residues 211 to 220 are extracellular; it reads LKLTFSGMNQ. Residues 221-241 traverse the membrane as a helical segment; sequence LIYPQTWVFTLIVLTCVITQM. At 242–255 the chain is on the cytoplasmic side; the sequence is NYLNKALDTFNTAV. A helical membrane pass occupies residues 256 to 276; it reads VSPIYYVMFTSLTILASVIMF. Residues 277 to 283 lie on the Extracellular side of the membrane; sequence KDWDRQD. A helical transmembrane segment spans residues 284–304; the sequence is GTQIVTELCGFVTILSGTFLL. Residues 305–368 lie on the Cytoplasmic side of the membrane; that stretch reads HKTKDMVDGS…ILPQDGPEAV (64 aa).

It belongs to the NIPA (TC 2.A.7) family. As to quaternary structure, homodimer.

The protein localises to the cell membrane. Its subcellular location is the early endosome. Acts as a Mg(2+) transporter. Can also transport other divalent cations such as Fe(2+), Sr(2+), Ba(2+), Mn(2+) and Co(2+) but to a much less extent than Mg(2+). This is Probable magnesium transporter NIPA3 from Arabidopsis thaliana (Mouse-ear cress).